The following is a 242-amino-acid chain: MSAVDYGREALDFIEGLGVYRKVPDAMNALEAAFGRFGFETIIVTGLPNPDQRFAQMVLAKRWPAGWFNLYTQNNYDRFDPVVRLCRQSVNPFEWSEAPYDAELEPSAAEVMNRAGDFRMSRGFIVPIHGLTGYEAAVSLGGVHLDLNPRSKPALHLMAMYGFDHIRRLLEPTPYPSTRLTPREREVISWASQGKSAWEIGEILHITQRTAEEHLATAARKLGAVNRTHAVALAIRHKIINP.

The HTH luxR-type domain occupies 173–238; the sequence is TPYPSTRLTP…HAVALAIRHK (66 aa). The segment at residues 197–216 is a DNA-binding region (H-T-H motif); it reads AWEIGEILHITQRTAEEHLA.

It belongs to the autoinducer-regulated transcriptional regulatory protein family.

Transcriptional activator that functions in response to the quorum-sensing autoinducer IV-HSL (isovaleryl-homoserine lactone). Activates BjaI expression. Is sensitive to IV-HSL at concentrations as low as 10 pM. The polypeptide is Transcriptional activator protein BjaR1 (bjaR1) (Bradyrhizobium diazoefficiens (strain JCM 10833 / BCRC 13528 / IAM 13628 / NBRC 14792 / USDA 110)).